The following is a 116-amino-acid chain: Iron-sulfur cluster insertion protein ErpA (116 aa).

Iron-sulfur cluster contacts are provided by Cys44, Cys108, and Cys110.

It belongs to the HesB/IscA family. In terms of assembly, homodimer. Iron-sulfur cluster is required as a cofactor.

In terms of biological role, required for insertion of 4Fe-4S clusters for at least IspG. The polypeptide is Iron-sulfur cluster insertion protein ErpA (Pseudomonas entomophila (strain L48)).